The following is a 463-amino-acid chain: Fibrinogen beta chain (463 aa).

Positions 1 to 12 are enriched in acidic residues; it reads ASVEYDNEEDSP. A disordered region spans residues 1–56; that stretch reads ASVEYDNEEDSPQIDARAHRPLDKRQEAAPTLRPVAPPISGTGYQPRPPKQDKQAM. A Sulfotyrosine modification is found at Y5. Residues 16–27 are compositionally biased toward basic and acidic residues; sequence ARAHRPLDKRQE. 2 disulfide bridges follow: C205–C289 and C215–C244. One can recognise a Fibrinogen C-terminal domain in the interval 206–461; sequence NIPVVSGREC…KMSMKIKPYF (256 aa). The N-linked (GlcNAc...) asparagine glycan is linked to N367. Residues D384, D386, and W388 each contribute to the Ca(2+) site. A disulfide bridge links C397 with C410.

Heterohexamer; disulfide linked. Contains 2 sets of 3 non-identical chains (alpha, beta and gamma). The 2 heterotrimers are in head to head conformation with the N-termini in a small central domain. In terms of processing, conversion of fibrinogen to fibrin is triggered by thrombin, which cleaves fibrinopeptides A and B from alpha and beta chains, and thus exposes the N-terminal polymerization sites responsible for the formation of the soft clot. The soft clot is converted into the hard clot by factor XIIIA which catalyzes the epsilon-(gamma-glutamyl)lysine cross-linking between gamma chains (stronger) and between alpha chains (weaker) of different monomers.

The protein localises to the secreted. Cleaved by the protease thrombin to yield monomers which, together with fibrinogen alpha (FGA) and fibrinogen gamma (FGG), polymerize to form an insoluble fibrin matrix. Fibrin has a major function in hemostasis as one of the primary components of blood clots. The protein is Fibrinogen beta chain (FGB) of Gallus gallus (Chicken).